The primary structure comprises 92 residues: C-C motif chemokine 22 (92 aa).

The first 24 residues, Met1 to Ala24, serve as a signal peptide directing secretion. 2 disulfides stabilise this stretch: Cys36–Cys60 and Cys37–Cys76.

This sequence belongs to the intercrine beta (chemokine CC) family. As to expression, expressed by activated splenic B-lymphocytes and dendritic cells. Low expression in lung, thymocytes, lymph node, and unstimulated splenic cells.

The protein resides in the secreted. Chemotactic for activated T-lymphocytes. May play an important role in the collaboration of dendritic cells and B-lymphocytes with T-cells in immune responses. This chain is C-C motif chemokine 22 (Ccl22), found in Mus musculus (Mouse).